Reading from the N-terminus, the 165-residue chain is REP-associated tyrosine transposase (165 aa).

This sequence belongs to the transposase 17 family. RAYT subfamily. As to quaternary structure, monomer.

Cleavage occurs in the presence of magnesium, but is much more pronounced with manganese. Functionally, transposase that is always flanked by repeated extragenic palindrome (REP) sequences, which are clustered in structures called bacterial interspersed mosaic elements (BIMEs). RayT catalyzes cleavage and recombination of BIMEs. Binds REP sequences and cleaves BIMEs both upstream and downstream of the REP sequence. Could be important in the creation of BIME variability and amplification. This is REP-associated tyrosine transposase from Escherichia coli (strain K12).